A 266-amino-acid polypeptide reads, in one-letter code: Norfluorocurarine synthase 2 (266 aa).

Residues 11–121 enclose the AB hydrolase-1 domain; that stretch reads HFVLVHGAGH…IMPDSTHPPI (111 aa). Catalysis depends on residues Ser-86, Asp-216, and His-244.

It belongs to the AB hydrolase superfamily. As to quaternary structure, homodimer. Mainly expressed in roots.

The enzyme catalyses 17-dehydropreakuammicine + H2O = norfluorocurarine + methanol + CO2. It functions in the pathway alkaloid biosynthesis. Its function is as follows. Hydrolase involved in the biosynthesis of curare monoterpene indole alkaloids (MIAs), natural products such as strychnine, a neurotoxic compound used as a pesticide to control rodents, and its pharmacologically active derivatives, including brucine, used to regulate blood pressure. Curare alkaloids act as animal glycine receptor antagonists. Catalyzes the conversion of dehydropreakuammicine to norfluorocurarine. This Strychnos nux-vomica (Poison nut) protein is Norfluorocurarine synthase 2.